The chain runs to 351 residues: AT-hook motif nuclear-localized protein 10 (351 aa).

The disordered stretch occupies residues 1-151 (MSGSETGLMA…RPPGSSSKRL (151 aa)). A compositionally biased stretch (low complexity) spans 23–37 (HQQQQHSQAQPQQSQ). The segment covering 60 to 77 (SPPQQYQPNSAGENSVLN) has biased composition (polar residues). Positions 97 to 105 (KKRRGRPRK) match the Bipartite nuclear localization signal motif. DNA-binding regions (a.T hook) lie at residues 97–109 (KKRR…YGPD) and 138–149 (KKRGRPPGSSSK). A PPC domain is found at 159 to 301 (TGIGFTPHVL…QMGLSSPVLP (143 aa)). Polar residues-rich tracts occupy residues 310–325 (MTPS…SESS) and 334–351 (IHQS…MPWK). The interval 310 to 351 (MTPSSPQSRGTMSESSCGGGHGSPIHQSTGGPYNNTINMPWK) is disordered.

It is found in the nucleus. In terms of biological role, transcription factor that specifically binds AT-rich DNA sequences related to the nuclear matrix attachment regions (MARs). In Arabidopsis thaliana (Mouse-ear cress), this protein is AT-hook motif nuclear-localized protein 10.